Here is a 283-residue protein sequence, read N- to C-terminus: uncharacterized protein (283 aa).

The N-terminal stretch at 1 to 21 (MKLKLKFLLISLLGSSLLLSA) is a signal peptide. Cys22 is lipidated: N-palmitoyl cysteine. Cys22 carries S-diacylglycerol cysteine lipidation.

Belongs to the MG439/MG440 family.

Its subcellular location is the cell membrane. This is an uncharacterized protein from Mycoplasma pneumoniae (strain ATCC 29342 / M129 / Subtype 1) (Mycoplasmoides pneumoniae).